Here is a 25-residue protein sequence, read N- to C-terminus: Css54 (25 aa).

In terms of tissue distribution, expressed by the venom gland.

It is found in the secreted. It localises to the target cell membrane. Its function is as follows. Amphipathic peptide that shows antibacterial activity against E.coli (MIC=12.5 ug/ml) and S.aureus (MIC=12.5 ug/ml). Has hemolytic activity against human erythrocytes (25 uM provokes 83% of hemolysis). May act by disrupting the integrity of the bacterial cell membrane. Increases efficacy of antibiotics (ethambutol, pyrazinamide, isoniazid, rifampicin) when tested against S.aureus, probably by facilitating their incorporation into the bacteria. This is Css54 from Centruroides suffusus (Durango bark scorpion).